We begin with the raw amino-acid sequence, 71 residues long: uncharacterized protein (71 aa).

This is an uncharacterized protein from Archaeoglobus fulgidus (strain ATCC 49558 / DSM 4304 / JCM 9628 / NBRC 100126 / VC-16).